A 548-amino-acid polypeptide reads, in one-letter code: Rop guanine nucleotide exchange factor 1 (548 aa).

Over residues 1 to 12 (MGSLSSEEDDEV) the composition is skewed to acidic residues. The interval 1 to 38 (MGSLSSEEDDEVSSERCGSYSPSADISESESSSSFSCH) is disordered. Over residues 19–36 (SYSPSADISESESSSSFS) the composition is skewed to low complexity. The PRONE domain maps to 81–462 (DKQPDNDLSE…DAMRRSISVT (382 aa)). Residues 458–548 (SISVTESLSL…RVTGVTPERD (91 aa)) form an involved in auto-inhibition region. Phosphoserine occurs at positions 460 and 480.

In terms of assembly, interacts with ARAC10/ROP11 and FER. Forms a complex with ARAC11/ROP1 and PRK2. Interacts in vitro (via PRONE domain) with PRK1, PRK2, PRK3 and PRK4. The C-terminal region is also important for the interaction with PRK2. Phosphorylated at Ser-460 and Ser-480 by PRK2. As to expression, expressed in roots, cotyledons, leaves, stems, sepals, petals, anthers, pollen grains, stigmas and siliques.

It is found in the cytoplasm. The protein resides in the cytosol. The protein localises to the cell membrane. Phosphorylation at Ser-460 and Ser-480 by PRK2 releases ROPGEF1 auto-inhibition, thereby activating ROPGEF1, which in turn activates ARAC11/ROP1. Its function is as follows. Guanine-nucleotide exchange factor (GEF) that acts as an activator of Rop (Rho of plants) GTPases by promoting the exchange of GDP for GTP. Acts downstream of PRK2 in the control of polarized pollen tube growth by activating ARAC11/ROP1. In association with ROPGEF4, acts as a specific regulator of ARAC10/ROP11 function in ABA-mediated stomatal closure. May play a role in the Rac/Rop-signaling pathway that controls ROS-mediated root hair development. In Arabidopsis thaliana (Mouse-ear cress), this protein is Rop guanine nucleotide exchange factor 1 (ROPGEF1).